Consider the following 245-residue polypeptide: tRNA1(Val) (adenine(37)-N6)-methyltransferase (245 aa).

It belongs to the methyltransferase superfamily. tRNA (adenine-N(6)-)-methyltransferase family.

The protein localises to the cytoplasm. It catalyses the reaction adenosine(37) in tRNA1(Val) + S-adenosyl-L-methionine = N(6)-methyladenosine(37) in tRNA1(Val) + S-adenosyl-L-homocysteine + H(+). Functionally, specifically methylates the adenine in position 37 of tRNA(1)(Val) (anticodon cmo5UAC). The chain is tRNA1(Val) (adenine(37)-N6)-methyltransferase from Escherichia coli O6:K15:H31 (strain 536 / UPEC).